The following is a 492-amino-acid chain: Transmembrane protein 39B (492 aa).

Residues M1–S53 form a disordered region. The N-linked (GlcNAc...) asparagine glycan is linked to N8. Residues S31–S53 show a composition bias toward low complexity. 8 consecutive transmembrane segments (helical) span residues S77–I97, T115–G135, S153–L175, T185–L205, E288–V308, L322–S342, I421–M441, and H447–L467.

It belongs to the TMEM39 family.

The protein localises to the endoplasmic reticulum membrane. May protect the cells against DNA damage caused by exposure to the cold-warming stress and facilitates tissue damage repair during the recovery phase. The chain is Transmembrane protein 39B from Rattus norvegicus (Rat).